A 70-amino-acid polypeptide reads, in one-letter code: SPbeta prophage-derived uncharacterized HTH-type transcriptional regulator YopO (70 aa).

One can recognise an HTH cro/C1-type domain in the interval 5 to 59 (IKQLMVKRGITIEELSRETMIDMQTLNKIIEMPDESDVTTIKLIALVLNVSIDEL). The H-T-H motif DNA-binding region spans 16–35 (IEELSRETMIDMQTLNKIIE).

This is SPbeta prophage-derived uncharacterized HTH-type transcriptional regulator YopO (yopO) from Bacillus subtilis (strain 168).